Consider the following 239-residue polypeptide: ATP-dependent dethiobiotin synthetase BioD (239 aa).

Position 15–20 (15–20) interacts with ATP; it reads EIGKTF. Position 19 (Thr19) interacts with Mg(2+). Residue Lys40 is part of the active site. ATP-binding positions include Asp57, 118 to 121, and 178 to 179; these read EGVG and NH. Mg(2+) is bound by residues Asp57 and Glu118.

The protein belongs to the dethiobiotin synthetase family. Homodimer. Requires Mg(2+) as cofactor.

It is found in the cytoplasm. It catalyses the reaction (7R,8S)-7,8-diammoniononanoate + CO2 + ATP = (4R,5S)-dethiobiotin + ADP + phosphate + 3 H(+). It participates in cofactor biosynthesis; biotin biosynthesis; biotin from 7,8-diaminononanoate: step 1/2. Functionally, catalyzes a mechanistically unusual reaction, the ATP-dependent insertion of CO2 between the N7 and N8 nitrogen atoms of 7,8-diaminopelargonic acid (DAPA, also called 7,8-diammoniononanoate) to form a ureido ring. The sequence is that of ATP-dependent dethiobiotin synthetase BioD from Burkholderia ambifaria (strain ATCC BAA-244 / DSM 16087 / CCUG 44356 / LMG 19182 / AMMD) (Burkholderia cepacia (strain AMMD)).